Here is a 153-residue protein sequence, read N- to C-terminus: Insulin-like growth factor 1.S (153 aa).

Intrachain disulfides connect C29/C38, C54/C96, C66/C109, and C100/C109. Positions 49–77 are b; it reads GPETLCGAELVDTLQFVCGDRGFYFSKPT. The c stretch occupies residues 78-89; that stretch reads GYGSNNRRSHHR. The tract at residues 90-110 is a; the sequence is GIVDECCFQSCDFRRLEMYCA. Positions 111–118 are d; the sequence is PAKQAKSA. Residues 119–153 constitute a propeptide, e peptide; that stretch reads RSVRTQRHTDMPKAQKEVHPKNTSRGNTGSRGFRM. The tract at residues 119 to 153 is disordered; it reads RSVRTQRHTDMPKAQKEVHPKNTSRGNTGSRGFRM. Positions 125–138 are enriched in basic and acidic residues; it reads RHTDMPKAQKEVHP. Residues 139 to 153 are compositionally biased toward polar residues; it reads KNTSRGNTGSRGFRM.

This sequence belongs to the insulin family. Expressed in adult liver, lung, heart, kidney and peritoneal fat.

It is found in the secreted. The insulin-like growth factors, isolated from plasma, are structurally and functionally related to insulin but have a much higher growth-promoting activity. Promotes head development by inhibiting Wnt signaling during embryogenesis. Acts as a ligand for IGF1R. Binds to the alpha subunit of IGF1R, leading to the activation of the intrinsic tyrosine kinase activity which autophosphorylates tyrosine residues in the beta subunit thus initiatiating a cascade of down-stream signaling events leading to activation of the PI3K-AKT/PKB and the Ras-MAPK pathways. Binds to integrins. Its binding to integrins and subsequent ternary complex formation with integrins and IGFR1 are essential for IGF1 signaling. The sequence is that of Insulin-like growth factor 1.S from Xenopus laevis (African clawed frog).